Here is a 101-residue protein sequence, read N- to C-terminus: Small ribosomal subunit protein uS14 (101 aa).

The protein belongs to the universal ribosomal protein uS14 family. In terms of assembly, part of the 30S ribosomal subunit. Contacts proteins S3 and S10.

Binds 16S rRNA, required for the assembly of 30S particles and may also be responsible for determining the conformation of the 16S rRNA at the A site. This is Small ribosomal subunit protein uS14 from Chromohalobacter salexigens (strain ATCC BAA-138 / DSM 3043 / CIP 106854 / NCIMB 13768 / 1H11).